Reading from the N-terminus, the 438-residue chain is Enolase (438 aa).

Glutamine 174 contacts (2R)-2-phosphoglycerate. The active-site Proton donor is the glutamate 216. The Mg(2+) site is built by aspartate 253, glutamate 297, and aspartate 324. (2R)-2-phosphoglycerate contacts are provided by lysine 349, arginine 378, serine 379, and lysine 400. Lysine 349 (proton acceptor) is an active-site residue.

This sequence belongs to the enolase family. In terms of assembly, component of the RNA degradosome, a multiprotein complex involved in RNA processing and mRNA degradation. Mg(2+) serves as cofactor.

The protein resides in the cytoplasm. It is found in the secreted. The protein localises to the cell surface. The catalysed reaction is (2R)-2-phosphoglycerate = phosphoenolpyruvate + H2O. The protein operates within carbohydrate degradation; glycolysis; pyruvate from D-glyceraldehyde 3-phosphate: step 4/5. Functionally, catalyzes the reversible conversion of 2-phosphoglycerate (2-PG) into phosphoenolpyruvate (PEP). It is essential for the degradation of carbohydrates via glycolysis. This Psychrobacter cryohalolentis (strain ATCC BAA-1226 / DSM 17306 / VKM B-2378 / K5) protein is Enolase.